Here is a 244-residue protein sequence, read N- to C-terminus: Claudin-12 (244 aa).

Residues 1 to 10 lie on the Cytoplasmic side of the membrane; it reads MGCRDVHAAT. Residues 11–31 traverse the membrane as a helical segment; that stretch reads VLSFLCGIASVAGLFAGTLLP. Residues 32 to 87 are Extracellular-facing; the sequence is NWRKLRLITFNRNEKNLTVYTGLWVKCARYDGGNDCLMYDAAWYSSVDQLDLRVLQ. Residues 88 to 108 form a helical membrane-spanning segment; that stretch reads FALPLSILIAMGALLLCLIGM. Residues 109–135 are Cytoplasmic-facing; that stretch reads CNTAFRSSVPNIKLAKCLVNSAGCHLV. A helical transmembrane segment spans residues 136–156; that stretch reads AGLLFFLAGTVSLSPSIWVIF. Topologically, residues 157 to 174 are extracellular; sequence YNIHLNRKFEPVFAFDYA. The chain crosses the membrane as a helical span at residues 175-195; sequence VYVTVASAGGLFMTALLLFIW. The Cytoplasmic portion of the chain corresponds to 196–244; that stretch reads YCACKSLPSPFWQPLYSHPPGMHTYSQPYSARSRLSAIEIDIPVVSHTT. Phosphoserine occurs at positions 228 and 231.

This sequence belongs to the claudin family. In terms of assembly, interacts with OCLN.

It localises to the cell junction. Its subcellular location is the tight junction. The protein resides in the cell membrane. Its function is as follows. Plays a major role in tight junction-specific obliteration of the intercellular space, through calcium-independent cell-adhesion activity. The protein is Claudin-12 (CLDN12) of Bos taurus (Bovine).